Consider the following 1668-residue polypeptide: Probable histone acetyltransferase HAC-like 1 (1668 aa).

3 disordered regions span residues 1–34 (MNVG…ADGL), 459–493 (QQQP…SEQG), and 528–551 (KGGQ…HDSQ). Polar residues predominate over residues 11–23 (GQMSGQAPQTNQV). Over residues 459–469 (QQQPNSQHQQS) the composition is skewed to low complexity. 2 stretches are compositionally biased toward polar residues: residues 470-491 (ILRS…QLSE) and 536-551 (LSSS…HDSQ). The segment at 651 to 732 (AAGNIYYFRQ…DLQCPVCSNA (82 aa)) adopts a TAZ-type 1 zinc-finger fold. A compositionally biased stretch (basic and acidic residues) spans 886 to 899 (KETSETAPEVKNEA). Residues 886–912 (KETSETAPEVKNEANDSTDITVSKSGK) are disordered. Polar residues predominate over residues 900-909 (NDSTDITVSK). The segment at 1002-1079 (HFFCIPCYNE…EYTCPNCYVE (78 aa)) adopts a PHD-type zinc-finger fold. Residues 1094–1530 (VLGAKDLPRT…VLYHLHNPTA (437 aa)) enclose the CBP/p300-type HAT domain. Acetyl-CoA contacts are provided by residues 1217-1219 (LDS), 1236-1237 (RT), and Trp1292. A coiled-coil region spans residues 1342 to 1365 (GAAEDMINQLRQEEDDRKQQKKGK). A ZZ-type zinc finger spans residues 1412 to 1475 (HLQYSCSHCC…TLHPVDIVGL (64 aa)). Residues Cys1417, Cys1420, Cys1432, Cys1435, Cys1441, Cys1444, His1457, and His1465 each coordinate Zn(2+). A TAZ-type 2 zinc finger spans residues 1553–1634 (EVCPDFDLRK…GCNVPRCRDL (82 aa)). Residues 1630–1650 (RCRDLKEHLRRLQQQSDSRRR) adopt a coiled-coil conformation.

It localises to the nucleus. It catalyses the reaction L-lysyl-[protein] + acetyl-CoA = N(6)-acetyl-L-lysyl-[protein] + CoA + H(+). Its function is as follows. Acetyltransferase enzyme. Acetylates histones, giving a specific tag for transcriptional activation. The protein is Probable histone acetyltransferase HAC-like 1 of Oryza sativa subsp. japonica (Rice).